The primary structure comprises 375 residues: PqqA peptide cyclase (375 aa).

One can recognise a Radical SAM core domain in the interval 18–235 (ILPPMAMLAE…EAREKYQGIL (218 aa)). Residues Cys32, Cys36, and Cys39 each contribute to the [4Fe-4S] cluster site.

The protein belongs to the radical SAM superfamily. PqqE family. In terms of assembly, interacts with PqqD. The interaction is necessary for activity of PqqE. [4Fe-4S] cluster is required as a cofactor.

The enzyme catalyses [PQQ precursor protein] + S-adenosyl-L-methionine = E-Y cross-linked-[PQQ precursor protein] + 5'-deoxyadenosine + L-methionine + H(+). Its pathway is cofactor biosynthesis; pyrroloquinoline quinone biosynthesis. In terms of biological role, catalyzes the cross-linking of a glutamate residue and a tyrosine residue in the PqqA protein as part of the biosynthesis of pyrroloquinoline quinone (PQQ). This chain is PqqA peptide cyclase, found in Rhizobium meliloti (strain 1021) (Ensifer meliloti).